The sequence spans 450 residues: Chromosomal replication initiator protein DnaA (450 aa).

The tract at residues 1-84 is domain I, interacts with DnaA modulators; that stretch reads MTENEQIFWN…AVDYVYEDNL (84 aa). The domain II stretch occupies residues 84 to 109; that stretch reads LMIEQQHQGQQGYTEQAFQQLPAVQS. A domain III, AAA+ region region spans residues 110–328; sequence DLNPKYSFDN…GALKDISLVA (219 aa). Positions 154, 156, 157, and 158 each coordinate ATP. The segment at 329-450 is domain IV, binds dsDNA; it reads NFKQIDTITV…EIETIKNKIK (122 aa).

This sequence belongs to the DnaA family. In terms of assembly, oligomerizes as a right-handed, spiral filament on DNA at oriC.

It is found in the cytoplasm. Plays an essential role in the initiation and regulation of chromosomal replication. ATP-DnaA binds to the origin of replication (oriC) to initiate formation of the DNA replication initiation complex once per cell cycle. Binds the DnaA box (a 9 base pair repeat at the origin) and separates the double-stranded (ds)DNA. Forms a right-handed helical filament on oriC DNA; dsDNA binds to the exterior of the filament while single-stranded (ss)DNA is stabiized in the filament's interior. The ATP-DnaA-oriC complex binds and stabilizes one strand of the AT-rich DNA unwinding element (DUE), permitting loading of DNA polymerase. After initiation quickly degrades to an ADP-DnaA complex that is not apt for DNA replication. Binds acidic phospholipids. In Streptococcus equi subsp. zooepidemicus (strain H70), this protein is Chromosomal replication initiator protein DnaA.